The chain runs to 895 residues: Transcription factor SWI6 (895 aa).

Polar residues predominate over residues 1 to 45 (MASTVAGNSFVSQQHPGNLHSANLQSQSQGFRRQNSTSSVPSTAS). The interval 1-107 (MASTVAGNSF…SDQNVPQQPQ (107 aa)) is disordered. Low complexity predominate over residues 64-100 (MSSQQSQPPASQQSFSMSQTGSQPQPSQSSFRSYSDQ). In terms of domain architecture, HTH APSES-type spans 112-219 (IYTAVYSNVE…NRNPDGSVSQ (108 aa)). Residues 143–164 (ATQILKVAGVEKGKRTKILEKE) constitute a DNA-binding region (H-T-H motif). 2 disordered regions span residues 272 to 293 (ARFD…SFQR) and 323 to 358 (NMAF…NSFG). 2 ANK repeats span residues 458–488 (QCHT…PFRV) and 607–636 (AGDT…SPHI). Positions 653–684 (SDGAMKTKGDSGGDVENGDVGGSSQKSNESSN) are disordered. The segment covering 674 to 684 (GSSQKSNESSN) has biased composition (polar residues). The stretch at 698–759 (SANFQEEIKN…VTNLQRAEER (62 aa)) forms a coiled coil.

Its subcellular location is the nucleus. Its function is as follows. Transcription factor that plays a role downstream of the MCK1-MKK2-MPS1 cascade. Required for hyphal morphogenesis and pathogenicity. Is an important oxidative stress response regulator and plays a positive role in the regulation of extracellular peroxidases. The chain is Transcription factor SWI6 from Pyricularia oryzae (strain 70-15 / ATCC MYA-4617 / FGSC 8958) (Rice blast fungus).